We begin with the raw amino-acid sequence, 228 residues long: Transmembrane protein 186 (228 aa).

Residues 1–93 (MDMMMMSTRL…RGLRALSRLK (93 aa)) are Mitochondrial matrix-facing. Residues 94 to 112 (LLQTGITVVLLPTVYYLHL) form a helical membrane-spanning segment. Topologically, residues 113–118 (QGQASV) are mitochondrial intermembrane. Residues 119–141 (LVLNRSIGIALFAGVMLYSISHF) form a helical membrane-spanning segment. Over 142-228 (VRRVVGMMYL…AFGKVFGSLS (87 aa)) the chain is Mitochondrial matrix.

Belongs to the TMEM186 family.

It is found in the mitochondrion inner membrane. Its function is as follows. May be required for efficient assembly of the mitochondrial complex I. In Danio rerio (Zebrafish), this protein is Transmembrane protein 186.